Here is a 523-residue protein sequence, read N- to C-terminus: GMP synthase [glutamine-hydrolyzing] (523 aa).

Residues 8-205 form the Glutamine amidotransferase type-1 domain; that stretch reads KILILDFGSQ…VVNICGCETK (198 aa). The active-site Nucleophile is Cys-85. Residues His-179 and Glu-181 contribute to the active site. Positions 206 to 398 constitute a GMPS ATP-PPase domain; the sequence is WTAENIIEDA…LGLPAEMLNR (193 aa). ATP is bound at residue 233-239; sequence SGGVDSS.

Homodimer.

The catalysed reaction is XMP + L-glutamine + ATP + H2O = GMP + L-glutamate + AMP + diphosphate + 2 H(+). It functions in the pathway purine metabolism; GMP biosynthesis; GMP from XMP (L-Gln route): step 1/1. Catalyzes the synthesis of GMP from XMP. This is GMP synthase [glutamine-hydrolyzing] from Glaesserella parasuis serovar 5 (strain SH0165) (Haemophilus parasuis).